The chain runs to 269 residues: Chymotrypsin-like elastase family member 2A (269 aa).

The signal sequence occupies residues methionine 1–serine 16. The propeptide at cysteine 17–arginine 28 is activation peptide. In terms of domain architecture, Peptidase S1 spans valine 29–alanine 267. Residues cysteine 58 and cysteine 74 are joined by a disulfide bond. Catalysis depends on charge relay system residues histidine 73 and aspartate 121. 3 disulfide bridges follow: cysteine 155–cysteine 222, cysteine 186–cysteine 202, and cysteine 212–cysteine 243. Serine 216 serves as the catalytic Charge relay system.

It belongs to the peptidase S1 family. Elastase subfamily. In terms of assembly, interacts with CPA1. Interacts with SERPINA1. In terms of tissue distribution, expressed in pancreas. Not detected in keratinocytes. Detected in exocrine secretions of the pancreas (at protein level). Also expressed in a small fraction of cells in pancreatic islets, adrenal cortex, intestinal glands and colonic lymphoid follicles (at protein level). Detected in plasma.

The protein localises to the secreted. It carries out the reaction Preferential cleavage: Leu-|-Xaa, Met-|-Xaa and Phe-|-Xaa. Hydrolyzes elastin.. Its function is as follows. Elastase that enhances insulin signaling and might have a physiologic role in cellular glucose metabolism. Circulates in plasma and reduces platelet hyperactivation, triggers both insulin secretion and degradation, and increases insulin sensitivity. In Homo sapiens (Human), this protein is Chymotrypsin-like elastase family member 2A.